Here is a 45-residue protein sequence, read N- to C-terminus: MPKRTFQPNNRRRARKHGFRARMRTRAGRAIIGARRSKGRASLSA.

Belongs to the bacterial ribosomal protein bL34 family.

The protein is Large ribosomal subunit protein bL34 of Kocuria rhizophila (strain ATCC 9341 / DSM 348 / NBRC 103217 / DC2201).